The following is a 693-amino-acid chain: Putative tyrosinase-like protein tyr-3 (693 aa).

An N-terminal signal peptide occupies residues 1 to 18 (MIRYIILLVYFLIFEVNS). 6 residues coordinate Cu cation: H142, H152, H161, H281, H285, and H308. ShKT domains lie at 472–506 (CFNE…CRQC), 516–550 (CSDR…CQKC), 591–625 (CYNE…CGVC), and 634–667 (CADY…CNTC). Intrachain disulfides connect C472–C506, C479–C499, C488–C503, C516–C550, C523–C543, C532–C547, C591–C625, C598–C618, C607–C622, C634–C667, C641–C660, and C650–C664.

It belongs to the tyrosinase family. The cofactor is Cu(2+).

In Caenorhabditis elegans, this protein is Putative tyrosinase-like protein tyr-3 (tyr-3).